The chain runs to 97 residues: Large ribosomal subunit protein bL28 (97 aa).

This sequence belongs to the bacterial ribosomal protein bL28 family.

The chain is Large ribosomal subunit protein bL28 from Rickettsia rickettsii (strain Iowa).